We begin with the raw amino-acid sequence, 275 residues long: Large ribosomal subunit protein uL2 (275 aa).

2 disordered regions span residues 24–54 (LYKG…VRHQ) and 223–275 (VAMN…RHKR). Basic and acidic residues-rich tracts occupy residues 25–38 (YKGR…EKKT) and 229–241 (DHPH…RTGE).

Belongs to the universal ribosomal protein uL2 family. In terms of assembly, part of the 50S ribosomal subunit. Forms a bridge to the 30S subunit in the 70S ribosome.

One of the primary rRNA binding proteins. Required for association of the 30S and 50S subunits to form the 70S ribosome, for tRNA binding and peptide bond formation. It has been suggested to have peptidyltransferase activity; this is somewhat controversial. Makes several contacts with the 16S rRNA in the 70S ribosome. The sequence is that of Large ribosomal subunit protein uL2 from Azoarcus sp. (strain BH72).